Reading from the N-terminus, the 258-residue chain is Acyl-[acyl-carrier-protein]--UDP-N-acetylglucosamine O-acyltransferase (258 aa).

The protein belongs to the transferase hexapeptide repeat family. LpxA subfamily. As to quaternary structure, homotrimer.

It is found in the cytoplasm. It carries out the reaction a (3R)-hydroxyacyl-[ACP] + UDP-N-acetyl-alpha-D-glucosamine = a UDP-3-O-[(3R)-3-hydroxyacyl]-N-acetyl-alpha-D-glucosamine + holo-[ACP]. It functions in the pathway glycolipid biosynthesis; lipid IV(A) biosynthesis; lipid IV(A) from (3R)-3-hydroxytetradecanoyl-[acyl-carrier-protein] and UDP-N-acetyl-alpha-D-glucosamine: step 1/6. Involved in the biosynthesis of lipid A, a phosphorylated glycolipid that anchors the lipopolysaccharide to the outer membrane of the cell. In Pseudomonas putida (strain ATCC 47054 / DSM 6125 / CFBP 8728 / NCIMB 11950 / KT2440), this protein is Acyl-[acyl-carrier-protein]--UDP-N-acetylglucosamine O-acyltransferase.